Consider the following 369-residue polypeptide: DNA replication and repair protein RecF (369 aa).

30-37 serves as a coordination point for ATP; sequence GQNGMGKT.

It belongs to the RecF family.

The protein resides in the cytoplasm. In terms of biological role, the RecF protein is involved in DNA metabolism; it is required for DNA replication and normal SOS inducibility. RecF binds preferentially to single-stranded, linear DNA. It also seems to bind ATP. The polypeptide is DNA replication and repair protein RecF (Bacteroides thetaiotaomicron (strain ATCC 29148 / DSM 2079 / JCM 5827 / CCUG 10774 / NCTC 10582 / VPI-5482 / E50)).